Consider the following 238-residue polypeptide: Cysteine-rich venom protein pseudechetoxin-like (238 aa).

A signal peptide spans 1–19; that stretch reads MIAFTVLLSLAAVLQQSSG. The propeptide occupies 20–28; it reads TVDFASESS. The region spanning 38–164 is the SCP domain; that stretch reads VDKHNDLRRS…STKYLYVCQY (127 aa). Cystine bridges form between Cys-75–Cys-153, Cys-92–Cys-165, Cys-148–Cys-162, Cys-184–Cys-191, Cys-187–Cys-196, Cys-200–Cys-233, Cys-209–Cys-227, and Cys-218–Cys-231. Positions 200 to 233 constitute a ShKT domain; it reads CKHNNDFSNCKALAKKSKCQTEWIKSKCPATCFC.

This sequence belongs to the CRISP family. Expressed by the venom gland.

It localises to the secreted. Blocks olfactory (CNGA2) and retinal (CNGA1) CNG channel currents. Does not affect neither depolarization- nor caffeine-induced contraction of smooth muscle. This chain is Cysteine-rich venom protein pseudechetoxin-like, found in Oxyuranus scutellatus scutellatus (Australian taipan).